Consider the following 787-residue polypeptide: Disease resistance protein ADR1 (787 aa).

Positions 1–149 constitute an RPW8 domain; that stretch reads MASFIDLFAG…LLTERNDSLS (149 aa). Residues 96 to 112 are a coiled coil; it reads HANKMKDLEKQISRFLN. Residue 193-200 participates in ATP binding; sequence GMSGSGKT. One can recognise an NB-ARC domain in the interval 247 to 414; that stretch reads HQRKLVILDD…PLDLLTSVWV (168 aa). 4 LRR repeats span residues 549–575, 576–599, 650–674, and 722–745; these read MSRL…IFAN, LAKL…TIPL, ITSL…LSNV, and LGSL…VAAL.

This sequence belongs to the disease resistance NB-LRR family.

Its function is as follows. Disease resistance (R) protein that mediates resistance against Hyaloperonospora parasitica in a salicylic acid-dependent manner. Also mediates resistance against Erysiphe cichoracearum is both salicylic acid-dependent and partially NPR1-dependent. Resistance proteins guard the plant against pathogens that contain an appropriate avirulence protein via an indirect interaction with this avirulence protein. That triggers a defense system including the hypersensitive response, which restricts the pathogen growth. This is Disease resistance protein ADR1 (ADR1) from Arabidopsis thaliana (Mouse-ear cress).